A 323-amino-acid polypeptide reads, in one-letter code: UPF0065 protein BP0148 (323 aa).

Positions 1–24 are cleaved as a signal peptide; sequence MKPFSLLRRIATIALLMAASSAHA.

It belongs to the UPF0065 (bug) family.

It is found in the periplasm. This Bordetella pertussis (strain Tohama I / ATCC BAA-589 / NCTC 13251) protein is UPF0065 protein BP0148.